The primary structure comprises 726 residues: MLLPRSVSSERAPGVPEPEELWEAEMERLRGSGTPVRGLPYAMMDKRLIWQLREPAGVQTLRWQRWQRRRQTVERRLREAAQRLARGLGLWEGALYEIGGLFGTGIRSYFTFLRFLLLLNLLSLLLTASFVLLPLVWLRPPDPGPTLNLTLQCPGSRQSPPGVLRFHNQLWHVLTGRAFTNTYLFYGAYRVGPESSSVYSIRLAYLLSPLACLLLCFCGTLRRMVKGLPQKTLLGQGYQAPLSAKVFSSWDFCIRVQEAATIKKHEISNEFKVELEEGRRFQLMQQQTRAQTACRLLSYLRVNVLNGLLVVGAISAIFWATKYSQDNKEESLFLLLQYLPPGVIALVNFLGPLLFTFLVQLENYPPNTEVNLTLIWCVVLKLASLGMFSVSLGQTILCIGRDKSSCESYGYNVCDYQCWENSVGEELYKLSIFNFLLTVAFAFLVTLPRRLLVDRFSGRFWAWLEREEFLVPKNVLDIVAGQTVTWMGLFYCPLLPLLNSVFLFLTFYIKKYTLLKNSRASSRPFRASSSTFFFQLVLLLGLLLAAVPLGYVVSSIHSSWDCGLFTNYSAPWQVVPELVALGLPPIGQRALHYLGSHAFSFPLLIMLSLVLTVCVSQTQANARAIHRLRKQLVWQVQEKWHLVEDLSRLLPEPGPSDSPGPKYPASQASRPQSFCPGCPCPGSPGHQAPRPGPSVVDAAGLRSPCPGQHGAPASARRFRFPSGAEL.

The Cytoplasmic segment spans residues 1–114 (MLLPRSVSSE…GIRSYFTFLR (114 aa)). Ser-6 is subject to Phosphoserine. Residues 115 to 135 (FLLLLNLLSLLLTASFVLLPL) form a helical membrane-spanning segment. At 136-200 (VWLRPPDPGP…VGPESSSVYS (65 aa)) the chain is on the lumenal side. The N-linked (GlcNAc...) asparagine glycan is linked to Asn-148. The chain crosses the membrane as a helical span at residues 201–221 (IRLAYLLSPLACLLLCFCGTL). The Cytoplasmic portion of the chain corresponds to 222-299 (RRMVKGLPQK…AQTACRLLSY (78 aa)). The chain crosses the membrane as a helical span at residues 300 to 320 (LRVNVLNGLLVVGAISAIFWA). Topologically, residues 321–338 (TKYSQDNKEESLFLLLQY) are lumenal. A helical membrane pass occupies residues 339–359 (LPPGVIALVNFLGPLLFTFLV). Over 360–426 (QLENYPPNTE…QCWENSVGEE (67 aa)) the chain is Cytoplasmic. Positions 362 to 530 (ENYPPNTEVN…SSRPFRASSS (169 aa)) are TMC domain. Residues 427–447 (LYKLSIFNFLLTVAFAFLVTL) traverse the membrane as a helical segment. Residues 448–488 (PRRLLVDRFSGRFWAWLEREEFLVPKNVLDIVAGQTVTWMG) are Lumenal-facing. The chain crosses the membrane as a helical span at residues 489 to 509 (LFYCPLLPLLNSVFLFLTFYI). At 510–531 (KKYTLLKNSRASSRPFRASSST) the chain is on the cytoplasmic side. A helical transmembrane segment spans residues 532 to 552 (FFFQLVLLLGLLLAAVPLGYV). Residues 553-594 (VSSIHSSWDCGLFTNYSAPWQVVPELVALGLPPIGQRALHYL) are Lumenal-facing. N-linked (GlcNAc...) asparagine glycosylation is present at Asn-567. Residues 595 to 615 (GSHAFSFPLLIMLSLVLTVCV) form a helical membrane-spanning segment. Residues 616–726 (SQTQANARAI…RFRFPSGAEL (111 aa)) are Cytoplasmic-facing. Positions 651 to 726 (PEPGPSDSPG…RFRFPSGAEL (76 aa)) are disordered. Residues 652-662 (EPGPSDSPGPK) are compositionally biased toward pro residues. 2 positions are modified to phosphoserine: Ser-658 and Ser-673.

Belongs to the TMC family. In terms of assembly, interacts with TMC6. Interacts and forms a complex with TMC6 and CIB1; the interaction stabilizes each component of the complex. Interacts and forms a complex with TMC6 and SLC30A1/ZNT1; the interaction regulates zinc transport into the ER. Interacts with TRADD; the interaction competes with TRADD/RIPK1/TRAF2/cIAPs complex I formation and facilites complex II formation. (Microbial infection) Interacts with human papillomavirus 16/HPV16 protein E5; the interaction alleviates TMC8-mediated transcription factors inhibition. In terms of tissue distribution, expressed in placenta, prostate and testis.

The protein resides in the endoplasmic reticulum membrane. It localises to the golgi apparatus membrane. The protein localises to the nucleus membrane. Functionally, acts as a regulatory protein involved in the regulation of numerous cellular processes. Together with its homolog TMC6/EVER1, forms a complex with calcium-binding protein CIB1 in lymphocytes and keratynocytes where TMC6 and TMC8 stabilize CIB1 levels and reciprocally. Together with TMC6, also forms a complex with and activates zinc transporter ZNT1 at the ER membrane of keratynocytes, thereby facilitating zinc uptake into the ER. Also inhibits receptor-mediated calcium release from ER stores and calcium activated and volume regulated chloride channels. Down-regulates the activity of transcription factors induced by zinc and cytokines. Also sequesters TRADD which impairs the recruitment of TRAF2 and RIPK1 in the pro-survival complex I and promotes proapoptotic complex II formation, and may therefore be involved in TNF-induced cell death/survival decisions. This Homo sapiens (Human) protein is Transmembrane channel-like protein 8.